Here is a 179-residue protein sequence, read N- to C-terminus: Replication restart protein DnaT (179 aa).

The disordered stretch occupies residues 156–179 (GGLPKRDVNTVSEPDSQIPPGFRG).

This sequence belongs to the DnaT family. In terms of assembly, homooligomerizes. Interacts with PriB. Component of the replication restart primosome. Primosome assembly occurs via a 'hand-off' mechanism. PriA binds to replication forks, subsequently PriB then DnaT bind; DnaT then displaces ssDNA to generate the helicase loading substrate.

Involved in the restart of stalled replication forks, which reloads the replicative helicase on sites other than the origin of replication. Can function in multiple replication restart pathways. Displaces ssDNA from a PriB-ssDNA complex. Probably forms a spiral filament on ssDNA. The sequence is that of Replication restart protein DnaT from Escherichia coli O81 (strain ED1a).